The following is a 214-amino-acid chain: Protein PsaE (214 aa).

A signal peptide spans 1–24 (MSHCVVLNKLESVLIIGDSRYALS). Positions 1-94 (MSHCVVLNKL…YKNEGYSYQK (94 aa)) form a DNA-binding region, ompR/PhoB-type.

In terms of biological role, required for expression of pH 6 antigen. The polypeptide is Protein PsaE (psaE) (Yersinia pseudotuberculosis serotype I (strain IP32953)).